We begin with the raw amino-acid sequence, 110 residues long: UPF0122 protein lmo1802 (110 aa).

Belongs to the UPF0122 family.

Functionally, might take part in the signal recognition particle (SRP) pathway. This is inferred from the conservation of its genetic proximity to ftsY/ffh. May be a regulatory protein. This chain is UPF0122 protein lmo1802, found in Listeria monocytogenes serovar 1/2a (strain ATCC BAA-679 / EGD-e).